Here is a 1295-residue protein sequence, read N- to C-terminus: Serine protease sat autotransporter (1295 aa).

The N-terminal stretch at 1–49 (MNKIYSLKYSAATGGLIAVSELAKRVSGKTNRKLVATMLSLAVAGTVNA) is a signal peptide. The 250-residue stretch at 51–300 (NIDISNVWAR…TKYNDKLVSE (250 aa)) folds into the Peptidase S6 domain. Residues His-121, Asp-149, and Ser-256 each act as charge relay system in the active site. The region spanning 1029-1295 (DINGESGAWA…AINANFRYSF (267 aa)) is the Autotransporter domain.

Cleaved to release the mature protein from the outer membrane.

Its subcellular location is the periplasm. It localises to the secreted. The protein localises to the cell surface. The protein resides in the cell outer membrane. Inhibited by phenylmethylsulfonyl fluoride and Pefabloc. In terms of biological role, shows serine protease activity and displays cytophatic activity, including elongation, rounding, and detachment of a proportion of the cells from monolayer in culture. Triggers vacuolation within the cytoplasm of the human bladder and kidney cells. This is Serine protease sat autotransporter (sat) from Escherichia coli O6:H1 (strain CFT073 / ATCC 700928 / UPEC).